A 364-amino-acid chain; its full sequence is C2 calcium-dependent domain-containing protein 4A (364 aa).

Disordered regions lie at residues 118–175 (GSPS…PPRC) and 192–242 (AGRS…RPER). The span at 220-233 (SPGSPTQAPVTSLS) shows a compositional bias: polar residues. The C2 domain maps to 254–364 (AGGALRLAAE…ELLLGPLLLL (111 aa)).

Belongs to the C2CD4 family.

It is found in the nucleus. May be involved in inflammatory process. May regulate cell architecture and adhesion. This chain is C2 calcium-dependent domain-containing protein 4A (C2CD4A), found in Bos taurus (Bovine).